Reading from the N-terminus, the 1098-residue chain is Eukaryotic translation initiation factor 3 subunit A (1098 aa).

The 180-residue stretch at 324–503 (AQEQATRVLL…DCVRFGSSDA (180 aa)) folds into the PCI domain. A coiled-coil region spans residues 574–844 (TEIERIHRRK…ARQAVIDSQR (271 aa)). Disordered regions lie at residues 599–648 (EKAA…KIKR) and 805–1098 (RAEK…NWRR). Basic and acidic residues-rich tracts occupy residues 608–648 (QAKR…KIKR), 805–857 (RAEK…REME), and 877–895 (MPQREPRPMRDGPPREPFR). Over residues 905 to 914 (DSSWRSSAQP) the composition is skewed to polar residues. Basic and acidic residues-rich tracts occupy residues 916-978 (RKPD…ERGA) and 1054-1079 (LPPRDLPPRDGPRDIPRRDGPRRDGP). Over residues 1080 to 1098 (NRNSGANNAGNADSANWRR) the composition is skewed to low complexity.

The protein belongs to the eIF-3 subunit A family. In terms of assembly, component of the eukaryotic translation initiation factor 3 (eIF-3) complex.

It localises to the cytoplasm. Its function is as follows. RNA-binding component of the eukaryotic translation initiation factor 3 (eIF-3) complex, which is involved in protein synthesis of a specialized repertoire of mRNAs and, together with other initiation factors, stimulates binding of mRNA and methionyl-tRNAi to the 40S ribosome. The eIF-3 complex specifically targets and initiates translation of a subset of mRNAs involved in cell proliferation. This is Eukaryotic translation initiation factor 3 subunit A from Caenorhabditis briggsae.